A 542-amino-acid chain; its full sequence is Peptide chain release factor 3 (542 aa).

In terms of domain architecture, tr-type G spans 14–283 (ELRRNFAIIS…YFLEYALKPG (270 aa)). Residues 23–30 (SHPDAGKT), 91–95 (DTPGH), and 145–148 (NKLD) contribute to the GTP site.

This sequence belongs to the TRAFAC class translation factor GTPase superfamily. Classic translation factor GTPase family. PrfC subfamily.

It localises to the cytoplasm. Its function is as follows. Increases the formation of ribosomal termination complexes and stimulates activities of RF-1 and RF-2. It binds guanine nucleotides and has strong preference for UGA stop codons. It may interact directly with the ribosome. The stimulation of RF-1 and RF-2 is significantly reduced by GTP and GDP, but not by GMP. The protein is Peptide chain release factor 3 of Nostoc punctiforme (strain ATCC 29133 / PCC 73102).